Reading from the N-terminus, the 389-residue chain is Chaperone protein DnaJ (389 aa).

The J domain occupies 6–70; the sequence is DYYEILGLSK…EKRAQYDRFG (65 aa). The CR-type zinc-finger motif lies at 131–213; sequence GVRKDIDIPR…CSGAGRVRSR (83 aa). Zn(2+) contacts are provided by C144, C147, C161, C164, C187, C190, C201, and C204. 4 CXXCXGXG motif repeats span residues 144 to 151, 161 to 168, 187 to 194, and 201 to 208; these read CSTCSGTG, CPNCGGTG, CSACHGRG, and CPTCSGAG. Residues 145–167 form a disordered region; that stretch reads STCSGTGAKPGTSPKRCPNCGGT. Residues 351 to 389 are disordered; the sequence is LSNGKKPEAEERSRSDKQKSEKPRKSKGLFEKVKDAFES. Residues 355–389 are compositionally biased toward basic and acidic residues; sequence KKPEAEERSRSDKQKSEKPRKSKGLFEKVKDAFES.

The protein belongs to the DnaJ family. Homodimer. The cofactor is Zn(2+).

It localises to the cytoplasm. Its function is as follows. Participates actively in the response to hyperosmotic and heat shock by preventing the aggregation of stress-denatured proteins and by disaggregating proteins, also in an autonomous, DnaK-independent fashion. Unfolded proteins bind initially to DnaJ; upon interaction with the DnaJ-bound protein, DnaK hydrolyzes its bound ATP, resulting in the formation of a stable complex. GrpE releases ADP from DnaK; ATP binding to DnaK triggers the release of the substrate protein, thus completing the reaction cycle. Several rounds of ATP-dependent interactions between DnaJ, DnaK and GrpE are required for fully efficient folding. Also involved, together with DnaK and GrpE, in the DNA replication of plasmids through activation of initiation proteins. The chain is Chaperone protein DnaJ from Methanosarcina mazei (strain ATCC BAA-159 / DSM 3647 / Goe1 / Go1 / JCM 11833 / OCM 88) (Methanosarcina frisia).